A 426-amino-acid chain; its full sequence is Serine--tRNA ligase (426 aa).

The interval 36–66 (KRKHLQERTQDLQSQRNTISKEIGQKKAKGE) is disordered. Residues 46 to 55 (DLQSQRNTIS) show a composition bias toward polar residues. 233–235 (TAE) contacts L-serine. Position 264–266 (264–266 (RSE)) interacts with ATP. E287 serves as a coordination point for L-serine. 351-354 (EISS) is a binding site for ATP. An L-serine-binding site is contributed by S387.

Belongs to the class-II aminoacyl-tRNA synthetase family. Type-1 seryl-tRNA synthetase subfamily. Homodimer. The tRNA molecule binds across the dimer.

It is found in the cytoplasm. The catalysed reaction is tRNA(Ser) + L-serine + ATP = L-seryl-tRNA(Ser) + AMP + diphosphate + H(+). It catalyses the reaction tRNA(Sec) + L-serine + ATP = L-seryl-tRNA(Sec) + AMP + diphosphate + H(+). Its pathway is aminoacyl-tRNA biosynthesis; selenocysteinyl-tRNA(Sec) biosynthesis; L-seryl-tRNA(Sec) from L-serine and tRNA(Sec): step 1/1. Functionally, catalyzes the attachment of serine to tRNA(Ser). Is also able to aminoacylate tRNA(Sec) with serine, to form the misacylated tRNA L-seryl-tRNA(Sec), which will be further converted into selenocysteinyl-tRNA(Sec). The chain is Serine--tRNA ligase from Francisella tularensis subsp. holarctica (strain FTNF002-00 / FTA).